The chain runs to 288 residues: Ribosomal RNA small subunit methyltransferase A (288 aa).

Positions 37, 39, 64, 86, 112, and 131 each coordinate S-adenosyl-L-methionine.

It belongs to the class I-like SAM-binding methyltransferase superfamily. rRNA adenine N(6)-methyltransferase family. RsmA subfamily.

It is found in the cytoplasm. The enzyme catalyses adenosine(1518)/adenosine(1519) in 16S rRNA + 4 S-adenosyl-L-methionine = N(6)-dimethyladenosine(1518)/N(6)-dimethyladenosine(1519) in 16S rRNA + 4 S-adenosyl-L-homocysteine + 4 H(+). Its function is as follows. Specifically dimethylates two adjacent adenosines (A1518 and A1519) in the loop of a conserved hairpin near the 3'-end of 16S rRNA in the 30S particle. May play a critical role in biogenesis of 30S subunits. The protein is Ribosomal RNA small subunit methyltransferase A of Rhodospirillum rubrum (strain ATCC 11170 / ATH 1.1.1 / DSM 467 / LMG 4362 / NCIMB 8255 / S1).